Consider the following 121-residue polypeptide: Chronic lymphocytic leukemia up-regulated protein 1 (121 aa).

Specifically expressed in chronic lymphocytic leukemia (CLL) cells from patients without immunoglobulin heavy-chain hypermutations. Expression is detected in all CLL cells and levels are similar in patients before and after treatment.

It localises to the cytoplasm. The sequence is that of Chronic lymphocytic leukemia up-regulated protein 1 (CLLU1) from Homo sapiens (Human).